The chain runs to 130 residues: Chemotaxis protein CheY-3 (130 aa).

In terms of domain architecture, Response regulatory spans 10-127; the sequence is KILIVDDFST…TLKEKLDKIF (118 aa). 4 residues coordinate Mg(2+): aspartate 15, aspartate 16, aspartate 60, and asparagine 62. Aspartate 60 bears the 4-aspartylphosphate mark.

As to quaternary structure, interacts with FliM. Mg(2+) is required as a cofactor.

It is found in the cytoplasm. Its function is as follows. Acts as a response regulator to control chemotaxis. Involved in the transmission of sensory signals from the chemoreceptors to the flagellar motors. Switches the flagellar rotation by binding to the flagellar motor switch protein FliM. In its active (phosphorylated or acetylated) form, exhibits enhanced binding to a switch component, FliM, at the flagellar motor which induces a change from counterclockwise to clockwise flagellar rotation. This Vibrio cholerae serotype O1 (strain ATCC 39315 / El Tor Inaba N16961) protein is Chemotaxis protein CheY-3.